The sequence spans 258 residues: Tryptophan synthase alpha chain (258 aa).

Residues E47 and D58 each act as proton acceptor in the active site.

This sequence belongs to the TrpA family. Tetramer of two alpha and two beta chains.

The catalysed reaction is (1S,2R)-1-C-(indol-3-yl)glycerol 3-phosphate + L-serine = D-glyceraldehyde 3-phosphate + L-tryptophan + H2O. It participates in amino-acid biosynthesis; L-tryptophan biosynthesis; L-tryptophan from chorismate: step 5/5. The alpha subunit is responsible for the aldol cleavage of indoleglycerol phosphate to indole and glyceraldehyde 3-phosphate. The protein is Tryptophan synthase alpha chain of Bacillus cereus (strain ATCC 10987 / NRS 248).